Reading from the N-terminus, the 242-residue chain is 2-C-methyl-D-erythritol 4-phosphate cytidylyltransferase (242 aa).

The protein belongs to the IspD/TarI cytidylyltransferase family. IspD subfamily.

The catalysed reaction is 2-C-methyl-D-erythritol 4-phosphate + CTP + H(+) = 4-CDP-2-C-methyl-D-erythritol + diphosphate. It functions in the pathway isoprenoid biosynthesis; isopentenyl diphosphate biosynthesis via DXP pathway; isopentenyl diphosphate from 1-deoxy-D-xylulose 5-phosphate: step 2/6. In terms of biological role, catalyzes the formation of 4-diphosphocytidyl-2-C-methyl-D-erythritol from CTP and 2-C-methyl-D-erythritol 4-phosphate (MEP). This Vesicomyosocius okutanii subsp. Calyptogena okutanii (strain HA) protein is 2-C-methyl-D-erythritol 4-phosphate cytidylyltransferase.